The following is a 67-amino-acid chain: MLDPSIDSLMNKLDSKYTLVTVSARRAREMQIKKDQQIEHTISHKYVGKALEEIDAGLLSFEREDSE.

Belongs to the RNA polymerase subunit omega family. The RNAP catalytic core consists of 2 alpha, 1 beta, 1 beta' and 1 omega subunit. When a sigma factor is associated with the core the holoenzyme is formed, which can initiate transcription.

It catalyses the reaction RNA(n) + a ribonucleoside 5'-triphosphate = RNA(n+1) + diphosphate. Promotes RNA polymerase assembly. Latches the N- and C-terminal regions of the beta' subunit thereby facilitating its interaction with the beta and alpha subunits. This is DNA-directed RNA polymerase subunit omega from Bacillus velezensis (strain DSM 23117 / BGSC 10A6 / LMG 26770 / FZB42) (Bacillus amyloliquefaciens subsp. plantarum).